Reading from the N-terminus, the 128-residue chain is Large ribosomal subunit protein bL17 (128 aa).

It belongs to the bacterial ribosomal protein bL17 family. Part of the 50S ribosomal subunit. Contacts protein L32.

This Histophilus somni (strain 129Pt) (Haemophilus somnus) protein is Large ribosomal subunit protein bL17.